Reading from the N-terminus, the 257-residue chain is Imidazole glycerol phosphate synthase subunit HisF (257 aa).

Residues Asp-11 and Asp-130 contribute to the active site.

This sequence belongs to the HisA/HisF family. Heterodimer of HisH and HisF.

It is found in the cytoplasm. The enzyme catalyses 5-[(5-phospho-1-deoxy-D-ribulos-1-ylimino)methylamino]-1-(5-phospho-beta-D-ribosyl)imidazole-4-carboxamide + L-glutamine = D-erythro-1-(imidazol-4-yl)glycerol 3-phosphate + 5-amino-1-(5-phospho-beta-D-ribosyl)imidazole-4-carboxamide + L-glutamate + H(+). The protein operates within amino-acid biosynthesis; L-histidine biosynthesis; L-histidine from 5-phospho-alpha-D-ribose 1-diphosphate: step 5/9. IGPS catalyzes the conversion of PRFAR and glutamine to IGP, AICAR and glutamate. The HisF subunit catalyzes the cyclization activity that produces IGP and AICAR from PRFAR using the ammonia provided by the HisH subunit. The polypeptide is Imidazole glycerol phosphate synthase subunit HisF (Actinobacillus succinogenes (strain ATCC 55618 / DSM 22257 / CCUG 43843 / 130Z)).